A 242-amino-acid polypeptide reads, in one-letter code: MVTVREEIRKGPWTEQEDLQLVCTVRLFGERRWDFIAKVSGLNRTGKSCRLRWVNYLHPGLKRGRMSPHEERLILELHARWGNRWSRIARRLPGRTDNEIKNYWRTHMRKKAQERKSNMSPSSSSSSLTYQSCHPETPSMIIGIEEQELHGGSGCITSIMKSTPVDMDGYPMDQIWMEIEAPNVLPGPCFDEAKDSASNSLSGPLLPYPMWDYYCPETCLRMDDEIKVAPQFGYGKGVGPCY.

2 HTH myb-type domains span residues 5 to 61 and 62 to 112; these read REEI…HPGL and KRGR…RKKA. A DNA-binding region (H-T-H motif) is located at residues 33–57; that stretch reads WDFIAKVSGLNRTGKSCRLRWVNYL. The Bipartite nuclear localization signal 1 motif lies at 62–65; it reads KRGR. Residues 85–108 constitute a DNA-binding region (H-T-H motif); sequence WSRIARRLPGRTDNEIKNYWRTHM. The Bipartite nuclear localization signal 2 motif lies at 109 to 117; that stretch reads RKKAQERKS. Positions 110 to 133 are disordered; the sequence is KKAQERKSNMSPSSSSSSLTYQSC. The segment covering 118 to 133 has biased composition (low complexity); the sequence is NMSPSSSSSSLTYQSC.

It is found in the nucleus. Functionally, transcription factor. The polypeptide is Myb-related protein MYBAS2 (MYBAS2) (Oryza sativa subsp. japonica (Rice)).